The chain runs to 305 residues: Tyrosine recombinase XerD (305 aa).

One can recognise a Core-binding (CB) domain in the interval 3–88 (PADASVIERF…TLRAFYGLCL (86 aa)). Positions 109 to 299 (SLPKALTESQ…ARQHLQKLHA (191 aa)) constitute a Tyr recombinase domain. Residues Arg149, Lys173, His251, Arg254, and His277 contribute to the active site. Tyr286 functions as the O-(3'-phospho-DNA)-tyrosine intermediate in the catalytic mechanism.

It belongs to the 'phage' integrase family. XerD subfamily. Forms a cyclic heterotetrameric complex composed of two molecules of XerC and two molecules of XerD.

It localises to the cytoplasm. Functionally, site-specific tyrosine recombinase, which acts by catalyzing the cutting and rejoining of the recombining DNA molecules. The XerC-XerD complex is essential to convert dimers of the bacterial chromosome into monomers to permit their segregation at cell division. It also contributes to the segregational stability of plasmids. This is Tyrosine recombinase XerD from Xanthomonas axonopodis pv. citri (strain 306).